We begin with the raw amino-acid sequence, 369 residues long: Somatostatin receptor type 2 (369 aa).

At 1–43 (MDMAYELLNGSQPWLSSPFDLNGSVATANSSNQTEPYYDLTSN) the chain is on the extracellular side. N-linked (GlcNAc...) asparagine glycans are attached at residues Asn-9, Asn-22, Asn-29, and Asn-32. Residues 44 to 67 (AVLTFIYFVVCIIGLCGNTLVIYV) form a helical membrane-spanning segment. The Cytoplasmic portion of the chain corresponds to 68 to 78 (ILRYAKMKTIT). Residues 79–103 (NIYILNLAIADELFMLGLPFLAMQV) form a helical membrane-spanning segment. Topologically, residues 104-118 (ALVHWPFGKAICRVV) are extracellular. A disulfide bond links Cys-115 and Cys-193. A helical transmembrane segment spans residues 119 to 138 (MTVDGINQFTSIFCLTVMSI). Residues 139–161 (DRYLAVVHPIKSAKWRRPRTAKM) are Cytoplasmic-facing. A helical membrane pass occupies residues 162 to 181 (INVAVWGVSLLVILPIMIYA). Residues 182–207 (GLRSNQWGRSSCTINWPGESGAWYTG) lie on the Extracellular side of the membrane. Residues 208–229 (FIIYAFILGFLVPLTIICLCYL) form a helical membrane-spanning segment. The Cytoplasmic portion of the chain corresponds to 230 to 253 (FIIIKVKSSGIRVGSSKRKKSEKK). The chain crosses the membrane as a helical span at residues 254–278 (VTRMVSIVVAVFIFCWLPFYIFNVS). Topologically, residues 279 to 288 (SVSVAISPTP) are extracellular. The chain crosses the membrane as a helical span at residues 289–303 (ALKGMFDFVVVLTYA). Residues 304–369 (NSCANPILYA…LLNGDLQTSI (66 aa)) are Cytoplasmic-facing. Cys-328 carries the S-palmitoyl cysteine lipid modification. 3 positions are modified to phosphoserine: Ser-341, Ser-343, and Ser-348. Residues Thr-353 and Thr-354 each carry the phosphothreonine modification.

It belongs to the G-protein coupled receptor 1 family. Homodimer and heterodimer with SSTR3 and SSTR5. Heterodimerization with SSTR3 inactivates SSTR3 receptor function. Heterodimerization with SSTR5 is enhanced by agonist stimulation of SSTR2 and increases SSTR2 cell growth inhibition activity. Following agonist stimulation, homodimers dissociate into monomers which is required for receptor internalization. Interacts with beta-arrestin; this interaction is necessary for receptor internalization and is destabilized by heterodimerization with SSTR5 which results in increased recycling of SSTR2 to the cell surface. Interacts (via C-terminus) with SHANK1 (via PDZ domain). In terms of processing, phosphorylated on serine and threonine residues in response to agonist stimulation, leading to receptor desensitization and rapid internalization. Phosphorylated to a greater extent on serine than threonine residues. Threonine phosphorylation is required for arrestin binding and receptor endocytosis but is not necessary for desensitization.

It localises to the cell membrane. It is found in the cytoplasm. Receptor for somatostatin-14 and -28. This receptor is coupled via pertussis toxin sensitive G proteins to inhibition of adenylyl cyclase. In addition it stimulates phosphotyrosine phosphatase and PLC via pertussis toxin insensitive as well as sensitive G proteins. Inhibits calcium entry by suppressing voltage-dependent calcium channels. Acts as the functionally dominant somatostatin receptor in pancreatic alpha- and beta-cells where it mediates the inhibitory effect of somatostatin-14 on hormone secretion. Inhibits cell growth through enhancement of MAPK1 and MAPK2 phosphorylation and subsequent up-regulation of CDKN1B. Stimulates neuronal migration and axon outgrowth and may participate in neuron development and maturation during brain development. Mediates negative regulation of insulin receptor signaling through PTPN6. Inactivates SSTR3 receptor function following heterodimerization. The protein is Somatostatin receptor type 2 (SSTR2) of Sus scrofa (Pig).